A 221-amino-acid chain; its full sequence is Imidazoleglycerol-phosphate dehydratase (221 aa).

Belongs to the imidazoleglycerol-phosphate dehydratase family.

It carries out the reaction D-erythro-1-(imidazol-4-yl)glycerol 3-phosphate = 3-(imidazol-4-yl)-2-oxopropyl phosphate + H2O. The protein operates within amino-acid biosynthesis; L-histidine biosynthesis; L-histidine from 5-phospho-alpha-D-ribose 1-diphosphate: step 6/9. The sequence is that of Imidazoleglycerol-phosphate dehydratase (HIS3) from Kluyveromyces marxianus (Yeast).